The chain runs to 99 residues: MALNAQDIARIANLARLELSSTESERMLGQLNDFFGIVEKMQAVDTSGVSPLSHPVAAIQDIALRLREDIASEPDQRDANQRSAPAVERGLFLVPKVIE.

It belongs to the GatC family. Heterotrimer of A, B and C subunits.

The catalysed reaction is L-glutamyl-tRNA(Gln) + L-glutamine + ATP + H2O = L-glutaminyl-tRNA(Gln) + L-glutamate + ADP + phosphate + H(+). The enzyme catalyses L-aspartyl-tRNA(Asn) + L-glutamine + ATP + H2O = L-asparaginyl-tRNA(Asn) + L-glutamate + ADP + phosphate + 2 H(+). Allows the formation of correctly charged Asn-tRNA(Asn) or Gln-tRNA(Gln) through the transamidation of misacylated Asp-tRNA(Asn) or Glu-tRNA(Gln) in organisms which lack either or both of asparaginyl-tRNA or glutaminyl-tRNA synthetases. The reaction takes place in the presence of glutamine and ATP through an activated phospho-Asp-tRNA(Asn) or phospho-Glu-tRNA(Gln). The protein is Aspartyl/glutamyl-tRNA(Asn/Gln) amidotransferase subunit C of Delftia acidovorans (strain DSM 14801 / SPH-1).